The chain runs to 398 residues: uncharacterized protein (398 aa).

In terms of domain architecture, CobW C-terminal spans V235–L351.

This is an uncharacterized protein from Mycobacterium bovis (strain ATCC BAA-935 / AF2122/97).